The primary structure comprises 457 residues: Multidrug resistance protein MdtK (457 aa).

A run of 12 helical transmembrane segments spans residues Leu-11–Val-31, Ile-53–Ala-73, Trp-93–Ile-113, Ala-127–Ala-147, Gly-160–Tyr-180, Val-191–Trp-211, Leu-243–Val-263, Ile-276–Thr-296, Arg-316–Met-336, Val-350–Ile-370, Ile-387–Ala-407, and Pro-418–Leu-438.

This sequence belongs to the multi antimicrobial extrusion (MATE) (TC 2.A.66.1) family. MdtK subfamily.

It is found in the cell inner membrane. Multidrug efflux pump that functions probably as a Na(+)/drug antiporter. The polypeptide is Multidrug resistance protein MdtK (Klebsiella pneumoniae (strain 342)).